Consider the following 61-residue polypeptide: Small ribosomal subunit protein uS14 (61 aa).

4 residues coordinate Zn(2+): Cys-24, Cys-27, Cys-40, and Cys-43.

This sequence belongs to the universal ribosomal protein uS14 family. Zinc-binding uS14 subfamily. Part of the 30S ribosomal subunit. Contacts proteins S3 and S10. Zn(2+) serves as cofactor.

Binds 16S rRNA, required for the assembly of 30S particles and may also be responsible for determining the conformation of the 16S rRNA at the A site. The protein is Small ribosomal subunit protein uS14 of Natranaerobius thermophilus (strain ATCC BAA-1301 / DSM 18059 / JW/NM-WN-LF).